The primary structure comprises 274 residues: Nitrogenase iron protein (274 aa).

8-15 lines the ATP pocket; the sequence is GKGGIGKS. C94 provides a ligand contact to [4Fe-4S] cluster. R97 bears the ADP-ribosylarginine; by dinitrogenase reductase ADP-ribosyltransferase mark. Position 131 (C131) interacts with [4Fe-4S] cluster.

This sequence belongs to the NifH/BchL/ChlL family. In terms of assembly, homodimer. The cofactor is [4Fe-4S] cluster. The reversible ADP-ribosylation of Arg-97 inactivates the nitrogenase reductase and regulates nitrogenase activity.

It catalyses the reaction N2 + 8 reduced [2Fe-2S]-[ferredoxin] + 16 ATP + 16 H2O = H2 + 8 oxidized [2Fe-2S]-[ferredoxin] + 2 NH4(+) + 16 ADP + 16 phosphate + 6 H(+). Functionally, the key enzymatic reactions in nitrogen fixation are catalyzed by the nitrogenase complex, which has 2 components: the iron protein and the molybdenum-iron protein. This chain is Nitrogenase iron protein, found in Chlorobium phaeobacteroides (strain DSM 266 / SMG 266 / 2430).